A 215-amino-acid polypeptide reads, in one-letter code: Probable transaldolase (215 aa).

K83 (schiff-base intermediate with substrate) is an active-site residue.

This sequence belongs to the transaldolase family. Type 3B subfamily.

The protein localises to the cytoplasm. The enzyme catalyses D-sedoheptulose 7-phosphate + D-glyceraldehyde 3-phosphate = D-erythrose 4-phosphate + beta-D-fructose 6-phosphate. It participates in carbohydrate degradation; pentose phosphate pathway; D-glyceraldehyde 3-phosphate and beta-D-fructose 6-phosphate from D-ribose 5-phosphate and D-xylulose 5-phosphate (non-oxidative stage): step 2/3. In terms of biological role, transaldolase is important for the balance of metabolites in the pentose-phosphate pathway. The chain is Probable transaldolase from Bdellovibrio bacteriovorus (strain ATCC 15356 / DSM 50701 / NCIMB 9529 / HD100).